The following is a 194-amino-acid chain: Adenylate kinase isoenzyme 1 (194 aa).

Residue Met1 is modified to N-acetylmethionine. 18-23 (GSGKGT) serves as a coordination point for ATP. Position 38 is a phosphoserine (Ser38). Positions 38–67 (STGDLLRAEVSSGSSRGKMLSSIMEKGELV) are NMP. AMP is bound by residues Thr39, Arg44, 65-67 (ELV), 94-97 (GYPR), and Gln101. An LID region spans residues 131-141 (KRGETSGRVDD). Position 132 (Arg132) interacts with ATP. Residues Arg138 and Arg149 each coordinate AMP. Gly177 contributes to the ATP binding site.

It belongs to the adenylate kinase family. AK1 subfamily. As to quaternary structure, monomer. The cofactor is Mg(2+).

It localises to the cytoplasm. The enzyme catalyses a ribonucleoside 5'-phosphate + ATP = a ribonucleoside 5'-diphosphate + ADP. It catalyses the reaction AMP + ATP = 2 ADP. It carries out the reaction dAMP + ATP = dADP + ADP. The catalysed reaction is dATP + AMP = dADP + ADP. The enzyme catalyses dAMP + dATP = 2 dADP. It catalyses the reaction a 2'-deoxyribonucleoside 5'-diphosphate + ATP = a 2'-deoxyribonucleoside 5'-triphosphate + ADP. It carries out the reaction a ribonucleoside 5'-diphosphate + ATP = a ribonucleoside 5'-triphosphate + ADP. The catalysed reaction is CDP + GTP = CTP + GDP. The enzyme catalyses GDP + ATP = GTP + ADP. It catalyses the reaction UDP + ATP = UTP + ADP. It carries out the reaction GTP + UDP = UTP + GDP. The catalysed reaction is dTDP + GTP = dTTP + GDP. The enzyme catalyses dCDP + GTP = dCTP + GDP. It catalyses the reaction dGDP + ATP = dGTP + ADP. It carries out the reaction dADP + GTP = dATP + GDP. The catalysed reaction is thiamine diphosphate + ADP = thiamine triphosphate + AMP. Functionally, catalyzes the reversible transfer of the terminal phosphate group between ATP and AMP. Also displays broad nucleoside diphosphate kinase activity. Plays an important role in cellular energy homeostasis and in adenine nucleotide metabolism. Also catalyzes at a very low rate the synthesis of thiamine triphosphate (ThTP) from thiamine diphosphate (ThDP) and ADP. The polypeptide is Adenylate kinase isoenzyme 1 (Ak1) (Rattus norvegicus (Rat)).